The sequence spans 396 residues: MAKEKFDRSKSHANIGTIGHVDHGKTTLTAAITTVLHKKSGKGTAMAYDQIDGAPEERERGITISTAHVEYETDNRHYAHVDCPGHADYVKNMITGAAQMDGAILVVSAADGPMPQTREHILLSRNVGVPYIVVFLNKCDMVDDEELLELVEMEVRDLLSEYEFPGDDVPVIKGSALKALEGDAQYEEKIFELMAAVDEYIPTPERETDKPFMMPVEDVFSITGRGTVATGRVERGQVKVGDEVEIIGLQEENKKTTVTGVEMFRKLLDYAEAGDNIGALLRGVSREEIQRGQVLAQPGTITPHKKFKAEVYVLSKEEGGRHTPFFSNYRPQFYFRTTDVTGIIQLPEGVEMVMPGDNIEMTVELISTIAIEDGTRFSIREGGRTVGSGVVSSIIE.

In terms of domain architecture, tr-type G spans 10–205; it reads KSHANIGTIG…AVDEYIPTPE (196 aa). A G1 region spans residues 19–26; it reads GHVDHGKT. 19 to 26 serves as a coordination point for GTP; it reads GHVDHGKT. Thr-26 contacts Mg(2+). The segment at 61 to 65 is G2; sequence GITIS. Residues 82–85 are G3; it reads DCPG. GTP-binding positions include 82–86 and 137–140; these read DCPGH and NKCD. The G4 stretch occupies residues 137–140; that stretch reads NKCD. The tract at residues 175–177 is G5; sequence SAL.

The protein belongs to the TRAFAC class translation factor GTPase superfamily. Classic translation factor GTPase family. EF-Tu/EF-1A subfamily. As to quaternary structure, monomer.

It is found in the cytoplasm. It catalyses the reaction GTP + H2O = GDP + phosphate + H(+). In terms of biological role, GTP hydrolase that promotes the GTP-dependent binding of aminoacyl-tRNA to the A-site of ribosomes during protein biosynthesis. This is Elongation factor Tu from Bacillus licheniformis (strain ATCC 14580 / DSM 13 / JCM 2505 / CCUG 7422 / NBRC 12200 / NCIMB 9375 / NCTC 10341 / NRRL NRS-1264 / Gibson 46).